Consider the following 669-residue polypeptide: Dymeclin (669 aa).

G2 carries N-myristoyl glycine lipidation.

It belongs to the dymeclin family. In terms of assembly, interacts with GOLM1 and PPIB. In terms of processing, myristoylated in vitro; myristoylation is not essential for protein targeting to Golgi compartment.

The protein resides in the cytoplasm. The protein localises to the golgi apparatus. Its subcellular location is the membrane. Functionally, necessary for correct organization of Golgi apparatus. Involved in bone development. The sequence is that of Dymeclin (Dym) from Mus musculus (Mouse).